The sequence spans 361 residues: D-malate dehydrogenase [decarboxylating] (361 aa).

Asp224, Asp248, and Asp252 together coordinate Mn(2+).

It belongs to the isocitrate and isopropylmalate dehydrogenases family. Requires Mg(2+) as cofactor. The cofactor is Mn(2+).

It localises to the cytoplasm. It carries out the reaction (R)-malate + NAD(+) = pyruvate + CO2 + NADH. Functionally, catalyzes the NAD(+)-dependent oxidative decarboxylation of D-malate into pyruvate. Is essential for aerobic growth on D-malate as the sole carbon source. But is not required for anaerobic D-malate utilization, although DmlA is expressed and active in those conditions. Appears to be not able to use L-tartrate as a substrate for dehydrogenation instead of D-malate. This is D-malate dehydrogenase [decarboxylating] (dmlA) from Escherichia coli (strain K12).